Consider the following 234-residue polypeptide: Peptidyl-tRNA hydrolase (234 aa).

Tyr14 contributes to the tRNA binding site. His19 (proton acceptor) is an active-site residue. TRNA contacts are provided by Phe64, Asn66, and Asn112. The interval 187-234 (TGTKADEEKPKPAKSHIHQARNGVQPKKLPETGPMAEMLKKMFGPKKD) is disordered.

The protein belongs to the PTH family. As to quaternary structure, monomer.

The protein resides in the cytoplasm. The enzyme catalyses an N-acyl-L-alpha-aminoacyl-tRNA + H2O = an N-acyl-L-amino acid + a tRNA + H(+). Functionally, hydrolyzes ribosome-free peptidyl-tRNAs (with 1 or more amino acids incorporated), which drop off the ribosome during protein synthesis, or as a result of ribosome stalling. Its function is as follows. Catalyzes the release of premature peptidyl moieties from peptidyl-tRNA molecules trapped in stalled 50S ribosomal subunits, and thus maintains levels of free tRNAs and 50S ribosomes. This chain is Peptidyl-tRNA hydrolase, found in Allorhizobium ampelinum (strain ATCC BAA-846 / DSM 112012 / S4) (Agrobacterium vitis (strain S4)).